Here is an 89-residue protein sequence, read N- to C-terminus: uncharacterized protein (89 aa).

The segment at R66 to D89 is disordered.

This is an uncharacterized protein from Cestrum parqui (CmYLCV).